Consider the following 276-residue polypeptide: MKTSATSFIPGSLVLAFCLPVVATSPKTLAIPEKLQEAVGKVTVNATTCTVICGLGFKEETVCEVGPDGVRRKCKSQRLECLTNWLCGMLHFTLLIGKEFKLSCLSPDILEIGQGAFRFTWRLARGIISTDDEVFKPFRASSYFIKFQSIQEYDSGTYRCDVQLLKNLRLVKRLYFGLRVLPPNLVNLNFHQSLTEDQKLVDEGLEVNLDNYSRPQHPPWKKKVAIAVGIGVAGGVTGGVLVSIVLCGRLSVIHSSASLETLQALLPKGGMLRKPD.

The signal sequence occupies residues 1–24 (MKTSATSFIPGSLVLAFCLPVVAT). The Extracellular segment spans residues 25-225 (SPKTLAIPEK…QHPPWKKKVA (201 aa)). Residue N45 is glycosylated (N-linked (GlcNAc...) asparagine). The region spanning 83 to 176 (TNWLCGMLHF…NLRLVKRLYF (94 aa)) is the Ig-like domain. Cysteines 104 and 160 form a disulfide. N211 carries N-linked (GlcNAc...) asparagine glycosylation. Residues 226–246 (IAVGIGVAGGVTGGVLVSIVL) form a helical membrane-spanning segment. The Cytoplasmic portion of the chain corresponds to 247–276 (CGRLSVIHSSASLETLQALLPKGGMLRKPD).

As to quaternary structure, forms a complex with IZUMO1 and SPACA6 on spermatocyte cell membrane required for fertilization.

Its subcellular location is the cell membrane. In terms of biological role, essential fertilization factor required for male fertility. Part of a conserved trimeric sperm complex with the essential fertilization factors IZUMO1 and SPACA6 which bridges sperm and oocyte membranes during fertilization by binding to IZUMO1R/JUNO on the oocyte. The polypeptide is Transmembrane protein 81 (TMEM81) (Bos taurus (Bovine)).